The following is a 223-amino-acid chain: AMSH-like ubiquitin thioesterase 2 (223 aa).

The region spanning 49-177 (VHISERLLED…YGIFKLTDPG (129 aa)) is the MPN domain. 7 residues coordinate Zn(2+): H127, H129, D140, H142, C185, H191, and H193. Positions 127 to 140 (HTHPSQGCFMSSVD) match the JAMM motif motif.

This sequence belongs to the peptidase M67C family. Requires Zn(2+) as cofactor.

Zinc metalloprotease that cleaves 'Lys-48'- and 'Lys-63'-linked polyubiquitin chains. This chain is AMSH-like ubiquitin thioesterase 2 (AMSH2), found in Arabidopsis thaliana (Mouse-ear cress).